A 44-amino-acid polypeptide reads, in one-letter code: U9-ctenitoxin-Co1a (44 aa).

4 disulfides stabilise this stretch: C3–C17, C10–C23, C16–C33, and C25–C31.

Expressed by the venom gland.

The protein resides in the secreted. Functionally, insecticidal neurotoxin that reversibly inhibits the N-methyl-D-aspartate (NMDA)-subtype of ionotropic glutamate receptor (GRIN) and inhibits inactivation of insect sodium channels (Nav). In vivo, is highly toxic to insects. This Ctenus ornatus (Brazilian spider) protein is U9-ctenitoxin-Co1a.